Reading from the N-terminus, the 290-residue chain is Protease HtpX homolog (290 aa).

2 helical membrane passes run 5-27 (MWLRTGVLMAILTGLLMGIGYLF) and 32-51 (VAFIMFLFSMFFNFITYWYS). His133 is a binding site for Zn(2+). The active site involves Glu134. His137 lines the Zn(2+) pocket. 2 helical membrane-spanning segments follow: residues 143 to 163 (ILIGTVAAAMAGAIMQLAYWA) and 182 to 202 (IIGAILVAILAPIAAMLIQAA). Glu208 is a Zn(2+) binding site.

This sequence belongs to the peptidase M48B family. Requires Zn(2+) as cofactor.

It localises to the cell membrane. This is Protease HtpX homolog from Thermococcus kodakarensis (strain ATCC BAA-918 / JCM 12380 / KOD1) (Pyrococcus kodakaraensis (strain KOD1)).